The following is a 547-amino-acid chain: uncharacterized protein (547 aa).

The protein to B.subtilis RocB.

This is an uncharacterized protein from Bacillus subtilis (strain 168).